A 150-amino-acid chain; its full sequence is 3-hydroxyacyl-[acyl-carrier-protein] dehydratase FabZ (150 aa).

The active site involves histidine 54.

Belongs to the thioester dehydratase family. FabZ subfamily.

It localises to the cytoplasm. The enzyme catalyses a (3R)-hydroxyacyl-[ACP] = a (2E)-enoyl-[ACP] + H2O. Functionally, involved in unsaturated fatty acids biosynthesis. Catalyzes the dehydration of short chain beta-hydroxyacyl-ACPs and long chain saturated and unsaturated beta-hydroxyacyl-ACPs. This chain is 3-hydroxyacyl-[acyl-carrier-protein] dehydratase FabZ, found in Colwellia psychrerythraea (strain 34H / ATCC BAA-681) (Vibrio psychroerythus).